A 158-amino-acid polypeptide reads, in one-letter code: Transcription elongation factor GreA (158 aa).

Residues 10-76 (TLEGKKKLEE…QIEKMIRNAE (67 aa)) are a coiled coil.

It belongs to the GreA/GreB family.

In terms of biological role, necessary for efficient RNA polymerase transcription elongation past template-encoded arresting sites. The arresting sites in DNA have the property of trapping a certain fraction of elongating RNA polymerases that pass through, resulting in locked ternary complexes. Cleavage of the nascent transcript by cleavage factors such as GreA or GreB allows the resumption of elongation from the new 3'terminus. GreA releases sequences of 2 to 3 nucleotides. The polypeptide is Transcription elongation factor GreA (Halalkalibacterium halodurans (strain ATCC BAA-125 / DSM 18197 / FERM 7344 / JCM 9153 / C-125) (Bacillus halodurans)).